Reading from the N-terminus, the 179-residue chain is Large ribosomal subunit protein uL5 (179 aa).

It belongs to the universal ribosomal protein uL5 family. Part of the 50S ribosomal subunit; part of the 5S rRNA/L5/L18/L25 subcomplex. Contacts the 5S rRNA and the P site tRNA. Forms a bridge to the 30S subunit in the 70S ribosome.

Its function is as follows. This is one of the proteins that bind and probably mediate the attachment of the 5S RNA into the large ribosomal subunit, where it forms part of the central protuberance. In the 70S ribosome it contacts protein S13 of the 30S subunit (bridge B1b), connecting the 2 subunits; this bridge is implicated in subunit movement. Contacts the P site tRNA; the 5S rRNA and some of its associated proteins might help stabilize positioning of ribosome-bound tRNAs. The chain is Large ribosomal subunit protein uL5 from Enterobacter sp. (strain 638).